Reading from the N-terminus, the 86-residue chain is Polcalcin Nic t 2 (86 aa).

2 EF-hand domains span residues 8–42 and 43–78; these read QDIADRERIFKRFDANGDGQISATELGETLQTLGS and VTPEEVKYMMDEIDTNKDGFISFQEFIEFARANRGL. Ca(2+) is bound by residues aspartate 21, asparagine 23, aspartate 25, glutamine 27, glutamate 32, aspartate 56, asparagine 58, aspartate 60, and glutamate 67.

The protein is Polcalcin Nic t 2 (Nict2) of Nicotiana tabacum (Common tobacco).